A 157-amino-acid chain; its full sequence is S-ribosylhomocysteine lyase (157 aa).

3 residues coordinate Fe cation: His54, His58, and Cys126.

It belongs to the LuxS family. In terms of assembly, homodimer. It depends on Fe cation as a cofactor.

The enzyme catalyses S-(5-deoxy-D-ribos-5-yl)-L-homocysteine = (S)-4,5-dihydroxypentane-2,3-dione + L-homocysteine. In terms of biological role, involved in the synthesis of autoinducer 2 (AI-2) which is secreted by bacteria and is used to communicate both the cell density and the metabolic potential of the environment. The regulation of gene expression in response to changes in cell density is called quorum sensing. Catalyzes the transformation of S-ribosylhomocysteine (RHC) to homocysteine (HC) and 4,5-dihydroxy-2,3-pentadione (DPD). The sequence is that of S-ribosylhomocysteine lyase from Bacillus cereus (strain G9842).